The chain runs to 50 residues: Ribosome-inactivating protein lyophyllin (50 aa).

It catalyses the reaction Endohydrolysis of the N-glycosidic bond at one specific adenosine on the 28S rRNA.. Its function is as follows. N-glycosylase that inhibits protein synthesis by depurinating ribosomal rRNA, and thus acts as a ribosomal inactivating protein (RIP). Has adenine polynucleotide glycosidase activity on the poly(A) substrate A30-ssDNA. Inhibits cell-free translation in rabbit reticulocyte lysate system with an IC(50) of 1 nM. May function in the defense response to pathogens. Displays antifungal activity against C.comatus and P.piricola, but not against R.solani, M.arachidicola and C.gossypii. Inhibits mycelial growth in P.piricola with an IC(50) of 2.5 uM. Has cytotoxic activity against the human cancer cell lines Hela, HepG2, and JAR, with IC(50) of 358.8, 489.8, and 926.9 nM respectively. It also inhibits HIV-1 reverse transcriptase activity (IC(50)=7.9 nM) and disrupts mouse embryonic development. This chain is Ribosome-inactivating protein lyophyllin, found in Lyophyllum shimeji (Hon-shimeji).